A 585-amino-acid chain; its full sequence is Arginine--tRNA ligase (585 aa).

The short motif at 131–141 is the 'HIGH' region element; sequence ANPTGPMHVGH.

The protein belongs to the class-I aminoacyl-tRNA synthetase family. In terms of assembly, monomer.

The protein localises to the cytoplasm. It catalyses the reaction tRNA(Arg) + L-arginine + ATP = L-arginyl-tRNA(Arg) + AMP + diphosphate. This chain is Arginine--tRNA ligase, found in Bartonella bacilliformis (strain ATCC 35685 / KC583 / Herrer 020/F12,63).